Reading from the N-terminus, the 512-residue chain is Maturase K (512 aa).

It belongs to the intron maturase 2 family. MatK subfamily.

Its subcellular location is the plastid. The protein localises to the chloroplast. In terms of biological role, usually encoded in the trnK tRNA gene intron. Probably assists in splicing its own and other chloroplast group II introns. The polypeptide is Maturase K (Oenothera argillicola (Appalachian evening primrose)).